We begin with the raw amino-acid sequence, 426 residues long: Serine--tRNA ligase (426 aa).

Residue 233-235 (TAE) coordinates L-serine. 264–266 (RSE) contributes to the ATP binding site. Residue glutamate 287 participates in L-serine binding. 351–354 (EISS) serves as a coordination point for ATP. Position 387 (serine 387) interacts with L-serine.

It belongs to the class-II aminoacyl-tRNA synthetase family. Type-1 seryl-tRNA synthetase subfamily. Homodimer. The tRNA molecule binds across the dimer.

The protein resides in the cytoplasm. The catalysed reaction is tRNA(Ser) + L-serine + ATP = L-seryl-tRNA(Ser) + AMP + diphosphate + H(+). It catalyses the reaction tRNA(Sec) + L-serine + ATP = L-seryl-tRNA(Sec) + AMP + diphosphate + H(+). The protein operates within aminoacyl-tRNA biosynthesis; selenocysteinyl-tRNA(Sec) biosynthesis; L-seryl-tRNA(Sec) from L-serine and tRNA(Sec): step 1/1. In terms of biological role, catalyzes the attachment of serine to tRNA(Ser). Is also able to aminoacylate tRNA(Sec) with serine, to form the misacylated tRNA L-seryl-tRNA(Sec), which will be further converted into selenocysteinyl-tRNA(Sec). The polypeptide is Serine--tRNA ligase (Clostridium tetani (strain Massachusetts / E88)).